The following is a 134-amino-acid chain: Cilia- and flagella-associated protein 144 (134 aa).

A disordered region spans residues 76–95; that stretch reads QGPRKKYPETQTENQEVGWD.

The protein belongs to the CFAP144 family. In terms of assembly, microtubule inner protein component of sperm flagellar doublet microtubules.

The protein resides in the cytoplasm. Its subcellular location is the cytoskeleton. It localises to the cilium axoneme. The protein localises to the flagellum axoneme. Its function is as follows. Microtubule inner protein (MIP) part of the dynein-decorated doublet microtubules (DMTs) in cilia axoneme, which is required for motile cilia beating. This chain is Cilia- and flagella-associated protein 144, found in Homo sapiens (Human).